A 172-amino-acid chain; its full sequence is Cytochrome b6-f complex iron-sulfur subunit (172 aa).

Residues 17–39 form a helical membrane-spanning segment; it reads VFLNALLSSSVGVVVVGTLYPVV. The Rieske domain occupies 61–161; sequence GKPISVSELL…ATVDGDNVRF (101 aa). [2Fe-2S] cluster contacts are provided by C107, H109, C125, and H128. An intrachain disulfide couples C112 to C127.

The protein belongs to the Rieske iron-sulfur protein family. In terms of assembly, the 4 large subunits of the cytochrome b6-f complex are cytochrome b6, subunit IV (17 kDa polypeptide, PetD), cytochrome f and the Rieske protein, while the 4 small subunits are PetG, PetL, PetM and PetN. The complex functions as a dimer. It depends on [2Fe-2S] cluster as a cofactor.

It is found in the cellular thylakoid membrane. The catalysed reaction is 2 oxidized [plastocyanin] + a plastoquinol + 2 H(+)(in) = 2 reduced [plastocyanin] + a plastoquinone + 4 H(+)(out). Functionally, component of the cytochrome b6-f complex, which mediates electron transfer between photosystem II (PSII) and photosystem I (PSI), cyclic electron flow around PSI, and state transitions. The protein is Cytochrome b6-f complex iron-sulfur subunit of Synechococcus sp. (strain JA-3-3Ab) (Cyanobacteria bacterium Yellowstone A-Prime).